Consider the following 760-residue polypeptide: DNA mismatch repair protein Mlh1 (760 aa).

Position 33 is an N6-acetyllysine (Lys33). Residues Asn38, Asp63, 82-84 (TSK), and 100-104 (RGEAL) contribute to the ATP site. Lys241 carries the N6-acetyllysine modification. Positions 354 to 375 (GPSGEAARPTTGVASSSTSGSG) are disordered. The segment covering 363-375 (TTGVASSSTSGSG) has biased composition (low complexity). Lys377 is modified (N6-acetyllysine). Over residues 400 to 409 (VSSLGPSQPQ) the composition is skewed to polar residues. The tract at residues 400–488 (VSSLGPSQPQ…EDSDVEMVEN (89 aa)) is disordered. Residues 412-654 (APVRGARTEG…LLIDSYVPPL (243 aa)) are interaction with EXO1. Residues 417–428 (ARTEGSPERATR) are compositionally biased toward basic and acidic residues. The segment covering 434 to 446 (LALPAPAEAAAES) has biased composition (low complexity). A compositionally biased stretch (polar residues) spans 455–472 (METSDAAQKAAPTSSPGS). The short motif at 475–478 (KRHR) is the Nuclear localization signal element. Residue Ser481 is modified to Phosphoserine.

This sequence belongs to the DNA mismatch repair MutL/HexB family. As to quaternary structure, component of the DNA mismatch repair (MMR) complex composed at least of MSH2, MSH3, MSH6, PMS1 and MLH1. Heterodimer of MLH1 and PMS2 (MutL alpha), MLH1 and PMS1 (MutL beta) or MLH1 and MLH3 (MutL gamma). Forms a ternary complex with MutS alpha (MSH2-MSH6) or MutS beta (MSH2-MSH3). Part of the BRCA1-associated genome surveillance complex (BASC), which contains BRCA1, MSH2, MSH6, MLH1, ATM, BLM, PMS2 and the RAD50-MRE11-NBS1 protein complex. This association could be a dynamic process changing throughout the cell cycle and within subnuclear domains. Interacts with MCM9; the interaction recruits MLH1 to chromatin. Interacts with MCM8. Interacts with PMS2. Interacts with MBD4. Interacts with EXO1. Interacts with MTMR15/FAN1. Post-translationally, acetylated. Deacetylated by HDAC6 which prevents the MutL alpha complex, formed by the MLH1-PMS2 heterodimer, from being recruited to the MutS alpha complex, formed by the MSH2-MSH6 heterodimer, leading to tolerance of DNA damage.

Its subcellular location is the nucleus. It is found in the chromosome. Functionally, heterodimerizes with Pms2 to form MutL alpha, a component of the post-replicative DNA mismatch repair system (MMR). DNA repair is initiated by MutS alpha (Msh2-Msh6) or MutS beta (MSH2-MSH3) binding to a dsDNA mismatch, then MutL alpha is recruited to the heteroduplex. Assembly of the MutL-MutS-heteroduplex ternary complex in presence of RFC and PCNA is sufficient to activate endonuclease activity of Pms2. It introduces single-strand breaks near the mismatch and thus generates new entry points for the exonuclease EXO1 to degrade the strand containing the mismatch. DNA methylation would prevent cleavage and therefore assure that only the newly mutated DNA strand is going to be corrected. MutL alpha (Mlh1-Pms2) interacts physically with the clamp loader subunits of DNA polymerase III, suggesting that it may play a role to recruit the DNA polymerase III to the site of the MMR. Also implicated in DNA damage signaling, a process which induces cell cycle arrest and can lead to apoptosis in case of major DNA damages. Heterodimerizes with Mlh3 to form MutL gamma which plays a role in meiosis. This chain is DNA mismatch repair protein Mlh1 (Mlh1), found in Mus musculus (Mouse).